We begin with the raw amino-acid sequence, 239 residues long: Ribonuclease HII (239 aa).

In terms of domain architecture, RNase H type-2 spans 18–231 (KIIVGLDEAG…SKNLLKEIEE (214 aa)). Residues Asp-24, Glu-25, and Asp-125 each coordinate a divalent metal cation.

The protein belongs to the RNase HII family. Mn(2+) is required as a cofactor. The cofactor is Mg(2+).

Its subcellular location is the cytoplasm. It carries out the reaction Endonucleolytic cleavage to 5'-phosphomonoester.. Endonuclease that specifically degrades the RNA of RNA-DNA hybrids. The sequence is that of Ribonuclease HII from Methanococcus maripaludis (strain C5 / ATCC BAA-1333).